A 407-amino-acid chain; its full sequence is Methylthioribose kinase (407 aa).

Residues N40, K57, and 111–113 each bind ATP; that span reads EDL. D229 is a binding site for substrate. An ATP-binding site is contributed by 246–248; it reads DAE. R344 provides a ligand contact to substrate.

Belongs to the methylthioribose kinase family. As to quaternary structure, homodimer.

The catalysed reaction is 5-(methylsulfanyl)-D-ribose + ATP = 5-(methylsulfanyl)-alpha-D-ribose 1-phosphate + ADP + H(+). It functions in the pathway amino-acid biosynthesis; L-methionine biosynthesis via salvage pathway; S-methyl-5-thio-alpha-D-ribose 1-phosphate from S-methyl-5'-thioadenosine (hydrolase route): step 2/2. Functionally, catalyzes the phosphorylation of methylthioribose into methylthioribose-1-phosphate. The chain is Methylthioribose kinase from Yersinia pseudotuberculosis serotype O:3 (strain YPIII).